Here is a 343-residue protein sequence, read N- to C-terminus: Phosphate acyltransferase (343 aa).

This sequence belongs to the PlsX family. In terms of assembly, homodimer. Probably interacts with PlsY.

Its subcellular location is the cytoplasm. It carries out the reaction a fatty acyl-[ACP] + phosphate = an acyl phosphate + holo-[ACP]. It participates in lipid metabolism; phospholipid metabolism. Functionally, catalyzes the reversible formation of acyl-phosphate (acyl-PO(4)) from acyl-[acyl-carrier-protein] (acyl-ACP). This enzyme utilizes acyl-ACP as fatty acyl donor, but not acyl-CoA. The sequence is that of Phosphate acyltransferase from Coxiella burnetii (strain RSA 331 / Henzerling II).